We begin with the raw amino-acid sequence, 327 residues long: DNA-directed RNA polymerase subunit alpha (327 aa).

The tract at residues M1–N227 is alpha N-terminal domain (alpha-NTD). Residues S244–S327 are alpha C-terminal domain (alpha-CTD).

Belongs to the RNA polymerase alpha chain family. Homodimer. The RNAP catalytic core consists of 2 alpha, 1 beta, 1 beta' and 1 omega subunit. When a sigma factor is associated with the core the holoenzyme is formed, which can initiate transcription.

It carries out the reaction RNA(n) + a ribonucleoside 5'-triphosphate = RNA(n+1) + diphosphate. Its function is as follows. DNA-dependent RNA polymerase catalyzes the transcription of DNA into RNA using the four ribonucleoside triphosphates as substrates. The protein is DNA-directed RNA polymerase subunit alpha of Tropheryma whipplei (strain TW08/27) (Whipple's bacillus).